The following is a 379-amino-acid chain: MSEQRDSRGMPQAGFIIEHQSSDHKWKVLRNIYSGPFSDVYVVADTVTNEKYAMKCERQEGNSRPVLKLDVMVLMATKGLRGFPNFVAAGRTDVYRYCIMQLVGPDLGRLRRTRPERKFSLPTALQILGQTLRRLEDLHNCGWLCRDVKAPNFCIGVGENESTVYILDFGFARKFVDKEGKIIPPRTAAALMGTFQYCAVSAHSHKDQCARDDLESWFYMGIELLKGPLPWANIDGHKNHKQIGEAKVAIRSEPLRSEFFEGVPKQFNEILTILDQTSYFDRPNYKKLGDLLSQAATEHQVTLKEPLDWQNNERMQQKAIFVGELGESHQASAKLDAKDNANESMDIEFDDMPPKEGISKSLSAEKSCTKNVETARTEK.

Residues 26 to 302 (WKVLRNIYSG…SQAATEHQVT (277 aa)) enclose the Protein kinase domain. ATP is bound by residues 32–40 (IYSGPFSDV) and Lys-55. Asp-147 serves as the catalytic Proton acceptor. A disordered region spans residues 331 to 379 (ASAKLDAKDNANESMDIEFDDMPPKEGISKSLSAEKSCTKNVETARTEK). Polar residues predominate over residues 360 to 372 (KSLSAEKSCTKNV).

This sequence belongs to the protein kinase superfamily. CK1 Ser/Thr protein kinase family.

It catalyses the reaction L-seryl-[protein] + ATP = O-phospho-L-seryl-[protein] + ADP + H(+). It carries out the reaction L-threonyl-[protein] + ATP = O-phospho-L-threonyl-[protein] + ADP + H(+). Its function is as follows. Serine/threonine-protein kinase which is involved in spermatogenesis. In spermatocytes, regulates meiosis and the localization and assembly of major sperm protein (MSP) into fibrous bodies. In addition, may suppress the initiation of spermiogenesis downstream of spe-8, spe-12, spe-27 and spe-29. The polypeptide is Serine/threonine-protein kinase spe-6 (Caenorhabditis elegans).